Here is a 234-residue protein sequence, read N- to C-terminus: Cyclo(L-leucyl-L-leucyl) synthase (234 aa).

Residue S28 is the Nucleophile of the active site. Substrate contacts are provided by residues 171–175, Y195, and 200–201; these read YVLAE and EL.

The protein belongs to the CDPS family.

It catalyses the reaction 2 L-leucyl-tRNA(Leu) = cyclo(L-leucyl-L-leucyl) + 2 tRNA(Leu) + 2 H(+). Functionally, it uses activated amino acids in the form of aminoacyl-tRNAs (aa-tRNAs) as substrates to catalyze the ATP-independent formation of cyclodipeptides which are intermediates in diketopiperazine (DKP) biosynthetic pathways. Catalyzes the formation of cyclo(L-Leu-L-Leu) (cLL) from L-leucyl-tRNA(Leu). Can incorporate various nonpolar residues, such as L-phenylalanine, L-leucine and L-methionine, into cyclodipeptides. In Staphylococcus haemolyticus (strain JCSC1435), this protein is Cyclo(L-leucyl-L-leucyl) synthase.